The chain runs to 290 residues: S-adenosylmethionine decarboxylase proenzyme (290 aa).

S138 (schiff-base intermediate with substrate; via pyruvic acid) is an active-site residue. S138 is subject to Pyruvic acid (Ser); by autocatalysis. H143 acts as the Proton acceptor; for processing activity in catalysis. The active-site Proton donor; for catalytic activity is the C166.

It belongs to the prokaryotic AdoMetDC family. Type 2 subfamily. As to quaternary structure, heterooctamer of four alpha and four beta chains arranged as a tetramer of alpha/beta heterodimers. The cofactor is pyruvate. In terms of processing, is synthesized initially as an inactive proenzyme. Formation of the active enzyme involves a self-maturation process in which the active site pyruvoyl group is generated from an internal serine residue via an autocatalytic post-translational modification. Two non-identical subunits are generated from the proenzyme in this reaction, and the pyruvate is formed at the N-terminus of the alpha chain, which is derived from the carboxyl end of the proenzyme. The post-translation cleavage follows an unusual pathway, termed non-hydrolytic serinolysis, in which the side chain hydroxyl group of the serine supplies its oxygen atom to form the C-terminus of the beta chain, while the remainder of the serine residue undergoes an oxidative deamination to produce ammonia and the pyruvoyl group blocking the N-terminus of the alpha chain.

It carries out the reaction S-adenosyl-L-methionine + H(+) = S-adenosyl 3-(methylsulfanyl)propylamine + CO2. It participates in amine and polyamine biosynthesis; S-adenosylmethioninamine biosynthesis; S-adenosylmethioninamine from S-adenosyl-L-methionine: step 1/1. Its function is as follows. Catalyzes the decarboxylation of S-adenosylmethionine to S-adenosylmethioninamine (dcAdoMet), the propylamine donor required for the synthesis of the polyamines spermine and spermidine from the diamine putrescine. This is S-adenosylmethionine decarboxylase proenzyme from Heliobacterium modesticaldum (strain ATCC 51547 / Ice1).